Consider the following 166-residue polypeptide: NAD(P)H-quinone oxidoreductase subunit I, chloroplastic (166 aa).

2 consecutive 4Fe-4S ferredoxin-type domains span residues Gly-55–Lys-84 and Leu-95–Glu-124. The [4Fe-4S] cluster site is built by Cys-64, Cys-67, Cys-70, Cys-74, Cys-104, Cys-107, Cys-110, and Cys-114.

The protein belongs to the complex I 23 kDa subunit family. As to quaternary structure, NDH is composed of at least 16 different subunits, 5 of which are encoded in the nucleus. Requires [4Fe-4S] cluster as cofactor.

Its subcellular location is the plastid. The protein resides in the chloroplast thylakoid membrane. The catalysed reaction is a plastoquinone + NADH + (n+1) H(+)(in) = a plastoquinol + NAD(+) + n H(+)(out). It carries out the reaction a plastoquinone + NADPH + (n+1) H(+)(in) = a plastoquinol + NADP(+) + n H(+)(out). In terms of biological role, NDH shuttles electrons from NAD(P)H:plastoquinone, via FMN and iron-sulfur (Fe-S) centers, to quinones in the photosynthetic chain and possibly in a chloroplast respiratory chain. The immediate electron acceptor for the enzyme in this species is believed to be plastoquinone. Couples the redox reaction to proton translocation, and thus conserves the redox energy in a proton gradient. This is NAD(P)H-quinone oxidoreductase subunit I, chloroplastic from Silphium perfoliatum (Cup plant).